The sequence spans 255 residues: Flagellar brake protein YcgR (255 aa).

One can recognise a PilZ domain in the interval glutamine 122–glutamate 240.

Belongs to the YcgR family. Monomer. Interacts with the flagellar basal bodies.

It localises to the bacterial flagellum basal body. In terms of biological role, acts as a flagellar brake, regulating swimming and swarming in a bis-(3'-5') cyclic diguanylic acid (c-di-GMP)-dependent manner. Binds 1 c-di-GMP dimer per subunit. Increasing levels of c-di-GMP lead to decreased motility. The sequence is that of Flagellar brake protein YcgR from Pectobacterium carotovorum subsp. carotovorum (strain PC1).